We begin with the raw amino-acid sequence, 208 residues long: Ribosomal RNA small subunit methyltransferase G (208 aa).

Residues glycine 76, leucine 81, 127-128, and arginine 142 contribute to the S-adenosyl-L-methionine site; that span reads VE.

The protein belongs to the methyltransferase superfamily. RNA methyltransferase RsmG family.

It localises to the cytoplasm. It carries out the reaction guanosine(527) in 16S rRNA + S-adenosyl-L-methionine = N(7)-methylguanosine(527) in 16S rRNA + S-adenosyl-L-homocysteine. Its function is as follows. Specifically methylates the N7 position of guanine in position 527 of 16S rRNA. The sequence is that of Ribosomal RNA small subunit methyltransferase G from Legionella pneumophila (strain Corby).